A 587-amino-acid chain; its full sequence is Tail sheath protein (587 aa).

It belongs to the myoviridae tail sheath protein family. Homomultimer.

Its subcellular location is the virion. The protein localises to the host cytoplasm. Its function is as follows. Polymerizes as an extended structure around the baseplate-tail tube complex. During ejection, the sheath shifts to a contracted form, thereby making the inner tail tube protrude through the host cell envelope. This chain is Tail sheath protein, found in Staphylococcus phage Twort (strain DSM 17442 / HER 48) (Bacteriophage Twort).